The following is a 20-amino-acid chain: U1-poneritoxin-Ni1a (20 aa).

Residue K20 is modified to Lysine amide.

The protein belongs to the non-disulfide-bridged peptide (NDBP) superfamily. Medium-length antimicrobial peptide (group 3) family. Ponericin-W subfamily. As to expression, expressed by the venom gland.

The protein localises to the secreted. It is found in the target cell membrane. Has activity against Gram-positive bacteria. Has insecticidal and hemolytic activities. May act by disrupting the integrity of the bacterial cell membrane. The chain is U1-poneritoxin-Ni1a from Neoponera inversa (Ant).